The primary structure comprises 734 residues: Photosystem I P700 chlorophyll a apoprotein A2 (734 aa).

Transmembrane regions (helical) follow at residues 46–69 (IFAS…FHVA), 135–158 (LYTG…LHLQ), 175–199 (LNHH…HVAI), 273–291 (IAHH…GHMY), 330–353 (LHFQ…QHMY), 369–395 (AALY…ILVI), 417–439 (AIIS…LYVH), and 517–535 (FLVH…LILV). Residues C559 and C568 each coordinate [4Fe-4S] cluster. Helical transmembrane passes span 575–596 (AFYL…YWHW) and 643–665 (LSVW…MFLI). H654, M662, and Y670 together coordinate chlorophyll a. A phylloquinone-binding site is contributed by W671. The helical transmembrane segment at 707 to 727 (LVGLAHFSVGYIFTYAAFLIA) threads the bilayer.

This sequence belongs to the PsaA/PsaB family. As to quaternary structure, the PsaA/B heterodimer binds the P700 chlorophyll special pair and subsequent electron acceptors. PSI consists of a core antenna complex that captures photons, and an electron transfer chain that converts photonic excitation into a charge separation. The eukaryotic PSI reaction center is composed of at least 11 subunits. P700 is a chlorophyll a/chlorophyll a' dimer, A0 is one or more chlorophyll a, A1 is one or both phylloquinones and FX is a shared 4Fe-4S iron-sulfur center. serves as cofactor.

The protein localises to the plastid. It is found in the chloroplast thylakoid membrane. It catalyses the reaction reduced [plastocyanin] + hnu + oxidized [2Fe-2S]-[ferredoxin] = oxidized [plastocyanin] + reduced [2Fe-2S]-[ferredoxin]. Its function is as follows. PsaA and PsaB bind P700, the primary electron donor of photosystem I (PSI), as well as the electron acceptors A0, A1 and FX. PSI is a plastocyanin-ferredoxin oxidoreductase, converting photonic excitation into a charge separation, which transfers an electron from the donor P700 chlorophyll pair to the spectroscopically characterized acceptors A0, A1, FX, FA and FB in turn. Oxidized P700 is reduced on the lumenal side of the thylakoid membrane by plastocyanin. The sequence is that of Photosystem I P700 chlorophyll a apoprotein A2 from Atropa belladonna (Belladonna).